We begin with the raw amino-acid sequence, 448 residues long: Tumor necrosis factor receptor superfamily member EDAR (448 aa).

Positions 1–26 (MAHVGDCTQTPWLPVLVVSLMCSARA) are cleaved as a signal peptide. Topologically, residues 27 to 187 (EYSNCGENEY…LSGQGHLATA (161 aa)) are extracellular. TNFR-Cys repeat units lie at residues 30-71 (NCGE…DYGC), 73-113 (PCPA…DAEC), and 115-148 (PCLPGYYMLENRPRNIYGMVCYSCLLAPPNTKEC). 6 cysteine pairs are disulfide-bonded: C31–C44, C47–C60, C50–C71, C74–C87, C93–C113, and C135–C148. N38 is a glycosylation site (N-linked (GlcNAc...) asparagine). A helical membrane pass occupies residues 188–208 (LIIAMSTIFIMAIAIVLIIMF). The Cytoplasmic segment spans residues 209-448 (YILKTKPSAP…PPASQPHAAS (240 aa)). The disordered stretch occupies residues 220-297 (CCTSHPGKSV…EEPAPDKQGS (78 aa)). Residues 233–243 (VSKDEEKKEAP) are compositionally biased toward basic and acidic residues. Over residues 271–283 (DASSENEQLLSRS) the composition is skewed to polar residues. Positions 358 to 431 (RMLSSTYNSE…DAVESLCADI (74 aa)) constitute a Death domain.

Binds to EDARADD. Associates with TRAF1, TRAF2, TRAF3 and NIK. As to expression, detected in fetal kidney, lung, skin and cultured neonatal epidermal keratinocytes. Not detected in lymphoblast and fibroblast cell lines.

The protein resides in the membrane. Receptor for EDA isoform A1, but not for EDA isoform A2. Mediates the activation of NF-kappa-B and JNK. May promote caspase-independent cell death. The protein is Tumor necrosis factor receptor superfamily member EDAR (EDAR) of Homo sapiens (Human).